The sequence spans 192 residues: MNKIKMIVGLGNSVYKYNQTRHNVGFWYINMLSSFYKTSLKFKKKFSGYVSSFFLNNNKIFLLKPDLFMNLNGYSVFALSSFYKIKLSEILVVRDELDLSPGILKVKYGIGHNGHNGVKSIINTFEKKKPFIQLCIGIGRPEFKKNVSNFVLECPSKIDTINIKKAILKFIFLTKDYIYKKEFLKNKKIILI.

Tyr17 provides a ligand contact to tRNA. The active-site Proton acceptor is the His22. 3 residues coordinate tRNA: Phe68, Asn70, and Asn116.

It belongs to the PTH family. In terms of assembly, monomer.

The protein resides in the cytoplasm. It carries out the reaction an N-acyl-L-alpha-aminoacyl-tRNA + H2O = an N-acyl-L-amino acid + a tRNA + H(+). Functionally, hydrolyzes ribosome-free peptidyl-tRNAs (with 1 or more amino acids incorporated), which drop off the ribosome during protein synthesis, or as a result of ribosome stalling. Catalyzes the release of premature peptidyl moieties from peptidyl-tRNA molecules trapped in stalled 50S ribosomal subunits, and thus maintains levels of free tRNAs and 50S ribosomes. This chain is Peptidyl-tRNA hydrolase, found in Buchnera aphidicola subsp. Cinara cedri (strain Cc).